Reading from the N-terminus, the 254-residue chain is Mitochondrial cardiolipin hydrolase (254 aa).

The Mitochondrial intermembrane segment spans residues 1–9 (MERFRWQVA). The interval 1-43 (MERFRWQVAAVAAVGLALALEALPSVLCWLRAGRRQQQRPPRR) is required for mitochondrial localization. Residues 10-32 (AVAAVGLALALEALPSVLCWLRA) form a helical membrane-spanning segment. The Cytoplasmic segment spans residues 33–254 (GRRQQQRPPR…SKCSHHLSQV (222 aa)). Residues 49 to 82 (PSQVTCTEALLQAPGEAPSGPPAGCRCSLPHGES) form a C3H1-type; atypical zinc finger. The PLD phosphodiesterase domain maps to 155 to 182 (DLGYMHHKFAIVDKKVLITGSLNWTTQA). Residues histidine 160, lysine 162, and aspartate 167 contribute to the active site.

The protein belongs to the phospholipase D family. MitoPLD/Zucchini subfamily. As to quaternary structure, homodimer. Interacts with MOV10L1. Interacts with MIGA1 and MIGA2; possibly facilitating homodimer formation. Interacts with GK2.

It is found in the mitochondrion outer membrane. The protein localises to the nucleus membrane. Its subcellular location is the cell membrane. It localises to the golgi apparatus. The catalysed reaction is a cardiolipin + H2O = a 1,2-diacyl-sn-glycero-3-phospho-(1'-sn-glycerol) + a 1,2-diacyl-sn-glycero-3-phosphate + H(+). Its activity is regulated as follows. Single stranded DNA (ssDNA) hydrolase activity does not depend upon, but is stimulated by the presence of Ca(2+) and Mn(2+). MIGA1 and MIGA2 increase PLD6 self-association affinity and affects the homodimer conformation facilitating its phospholipase activity over the nuclease activity. MYC induces its expression and stimulates its phospholipase activity. Its function is as follows. Presents phospholipase and nuclease activities, depending on the different physiological conditions. Interaction with Mitoguardin (MIGA1 or MIGA2) affects the dimer conformation, facilitating the lipase activity over the nuclease activity. Plays a key role in mitochondrial fusion and fission via its phospholipase activity. In its phospholipase role, it uses the mitochondrial lipid cardiolipin as substrate to generate phosphatidate (PA or 1,2-diacyl-sn-glycero-3-phosphate), a second messenger signaling lipid. Production of PA facilitates Mitofusin-mediated fusion, whereas the cleavage of PA by the Lipin family of phosphatases produces diacylgycerol (DAG) which promotes mitochondrial fission. Both Lipin and DAG regulate mitochondrial dynamics and membrane fusion/fission, important processes for adapting mitochondrial metabolism to changes in cell physiology. Mitochondrial fusion enables cells to cope with the increased nucleotide demand during DNA synthesis. Mitochondrial function and dynamics are closely associated with biological processes such as cell growth, proliferation, and differentiation. Mediator of MYC activity, promotes mitochondrial fusion and activates AMPK which in turn inhibits YAP/TAZ, thereby inducing cell growth and proliferation. The endonuclease activity plays a critical role in PIWI-interacting RNA (piRNA) biogenesis during spermatogenesis. Implicated in spermatogenesis and sperm fertility in testicular germ cells, its single strand-specific nuclease activity is critical for the biogenesis/maturation of PIWI-interacting RNA (piRNA). MOV10L1 selectively binds to piRNA precursors and funnels them to the endonuclease that catalyzes the first cleavage step of piRNA processing to generate piRNA intermediate fragments that are subsequently loaded to Piwi proteins. Cleaves either DNA or RNA substrates with similar affinity, producing a 5' phosphate end, in this way it participates in the processing of primary piRNA transcripts. piRNAs provide essential protection against the activity of mobile genetic elements. piRNA-mediated transposon silencing is thus critical for maintaining genome stability, in particular in germline cells when transposons are mobilized as a consequence of wide-spread genomic demethylation. PA may act as signaling molecule in the recognition/transport of the precursor RNAs of primary piRNAs. Interacts with tesmin in testes, suggesting a role in spermatogenesis via association with its interacting partner. This chain is Mitochondrial cardiolipin hydrolase (PLD6), found in Canis lupus familiaris (Dog).